A 708-amino-acid chain; its full sequence is Homeobox-leucine zipper protein HDG10 (708 aa).

Residues 1–24 are disordered; sequence MDSSHNDSSSDEEGIDSNNRRHHS. Residues 16 to 75 constitute a DNA-binding region (homeobox); sequence DSNNRRHHSNHQVQRLEAFFHECPHPDDSQRRQLGNELNLKHKQIKFWFQNRRTQARIHN. A coiled-coil region spans residues 119–141; sequence LCNLQKLRTKNVILKTEYERLSS. A disordered region spans residues 162–188; sequence GPSTYGSTSNNRPASYGSSSNHLPQQS. Polar residues predominate over residues 165 to 188; it reads TYGSTSNNRPASYGSSSNHLPQQS. An START domain is found at 218–456; the sequence is SQLEKNRMFE…LQRMCERLSL (239 aa).

Belongs to the HD-ZIP homeobox family. Class IV subfamily. In terms of assembly, interacts with ANT, BBM and AIL1. Expressed in exclusively in anthers with highest levels in the tapetum and pollen grains.

It localises to the nucleus. In terms of biological role, probable transcription factor. This chain is Homeobox-leucine zipper protein HDG10, found in Arabidopsis thaliana (Mouse-ear cress).